Reading from the N-terminus, the 462-residue chain is Argininosuccinate lyase (462 aa).

This sequence belongs to the lyase 1 family. Argininosuccinate lyase subfamily.

It localises to the cytoplasm. It catalyses the reaction 2-(N(omega)-L-arginino)succinate = fumarate + L-arginine. Its pathway is amino-acid biosynthesis; L-arginine biosynthesis; L-arginine from L-ornithine and carbamoyl phosphate: step 3/3. The sequence is that of Argininosuccinate lyase from Pelagibacter ubique (strain HTCC1062).